The following is a 169-amino-acid chain: Crossover junction endodeoxyribonuclease RuvC (169 aa).

Active-site residues include D11, E71, and D143. Positions 11, 71, and 143 each coordinate Mg(2+).

The protein belongs to the RuvC family. Homodimer which binds Holliday junction (HJ) DNA. The HJ becomes 2-fold symmetrical on binding to RuvC with unstacked arms; it has a different conformation from HJ DNA in complex with RuvA. In the full resolvosome a probable DNA-RuvA(4)-RuvB(12)-RuvC(2) complex forms which resolves the HJ. Mg(2+) is required as a cofactor.

The protein resides in the cytoplasm. It carries out the reaction Endonucleolytic cleavage at a junction such as a reciprocal single-stranded crossover between two homologous DNA duplexes (Holliday junction).. Its function is as follows. The RuvA-RuvB-RuvC complex processes Holliday junction (HJ) DNA during genetic recombination and DNA repair. Endonuclease that resolves HJ intermediates. Cleaves cruciform DNA by making single-stranded nicks across the HJ at symmetrical positions within the homologous arms, yielding a 5'-phosphate and a 3'-hydroxyl group; requires a central core of homology in the junction. The consensus cleavage sequence is 5'-(A/T)TT(C/G)-3'. Cleavage occurs on the 3'-side of the TT dinucleotide at the point of strand exchange. HJ branch migration catalyzed by RuvA-RuvB allows RuvC to scan DNA until it finds its consensus sequence, where it cleaves and resolves the cruciform DNA. The sequence is that of Crossover junction endodeoxyribonuclease RuvC from Allorhizobium ampelinum (strain ATCC BAA-846 / DSM 112012 / S4) (Agrobacterium vitis (strain S4)).